Here is a 320-residue protein sequence, read N- to C-terminus: o-succinylbenzoate synthase (320 aa).

The Proton donor role is filled by Lys133. Mg(2+) contacts are provided by Asp161, Glu190, and Asp213. Lys235 serves as the catalytic Proton acceptor.

Belongs to the mandelate racemase/muconate lactonizing enzyme family. MenC type 1 subfamily. A divalent metal cation serves as cofactor.

The enzyme catalyses (1R,6R)-6-hydroxy-2-succinyl-cyclohexa-2,4-diene-1-carboxylate = 2-succinylbenzoate + H2O. It functions in the pathway quinol/quinone metabolism; 1,4-dihydroxy-2-naphthoate biosynthesis; 1,4-dihydroxy-2-naphthoate from chorismate: step 4/7. The protein operates within quinol/quinone metabolism; menaquinone biosynthesis. Functionally, converts 2-succinyl-6-hydroxy-2,4-cyclohexadiene-1-carboxylate (SHCHC) to 2-succinylbenzoate (OSB). This is o-succinylbenzoate synthase from Escherichia coli O6:H1 (strain CFT073 / ATCC 700928 / UPEC).